The sequence spans 211 residues: High mobility group protein B1-like 1 (211 aa).

N6-acetyllysine is present on residues lysine 3, lysine 7, lysine 8, lysine 12, lysine 28, lysine 29, and lysine 30. Residues 9–79 (PRGKMSSYAF…HYERQMKTYI (71 aa)) constitute a DNA-binding region (HMG box 1). The segment at 71–96 (YERQMKTYIPPKGETKKKFKDPNAPK) is disordered. The segment covering 83-94 (GETKKKFKDPNA) has biased composition (basic and acidic residues). The HMG box 2 DNA-binding region spans 95–163 (PKRPPSAFFL…KYEKDIAAYQ (69 aa)). 10 positions are modified to N6-acetyllysine: lysine 127, lysine 128, lysine 172, lysine 173, lysine 177, lysine 180, lysine 182, lysine 183, lysine 184, and lysine 185. The tract at residues 161 to 211 (AYQAKGKPEAAKKGVVKAEKSKKKKEEEEDEEDEEDEEEEDEEDEEDDDDE) is disordered. Positions 166–179 (GKPEAAKKGVVKAE) are enriched in basic and acidic residues. A compositionally biased stretch (acidic residues) spans 187-211 (EEEDEEDEEDEEEEDEEDEEDDDDE).

Belongs to the HMGB family.

Its subcellular location is the nucleus. The protein localises to the chromosome. Its function is as follows. Binds preferentially single-stranded DNA and unwinds double-stranded DNA. The sequence is that of High mobility group protein B1-like 1 (HMGB1P1) from Homo sapiens (Human).